The primary structure comprises 335 residues: Adenosine deaminase (335 aa).

Positions 12 and 14 each coordinate Zn(2+). Substrate is bound by residues His14 and Asp16. His197 is a binding site for Zn(2+). Glu200 functions as the Proton donor in the catalytic mechanism. Asp278 contacts Zn(2+).

This sequence belongs to the metallo-dependent hydrolases superfamily. Adenosine and AMP deaminases family. Adenosine deaminase subfamily. Requires Zn(2+) as cofactor.

It carries out the reaction adenosine + H2O + H(+) = inosine + NH4(+). The catalysed reaction is 2'-deoxyadenosine + H2O + H(+) = 2'-deoxyinosine + NH4(+). Its function is as follows. Catalyzes the hydrolytic deamination of adenosine and 2-deoxyadenosine. The chain is Adenosine deaminase from Clostridium botulinum (strain Okra / Type B1).